Here is a 232-residue protein sequence, read N- to C-terminus: MTNADPHELQKFSDLAHKWWDPNAEFKPLHDLNPIRLNWIDAHAHLPGKRVVDIGCGGGILSESMASLGAQVKGIDLATEALGVADLHSLESGVSVDYEAIAAEALAAREPGAYDVVTCMEMLEHVPSPANIVAACATLVKPGGWVFFSTLNRNLKSYLLAVIGAEYIAQMLPKGTHDYARFIRPSELAHFVRAAGLQLVEIKGITYHPLAKRFALSNDTDVNYLVACRRSV.

S-adenosyl-L-methionine-binding residues include R36, G55, D76, and M120.

The protein belongs to the methyltransferase superfamily. UbiG/COQ3 family.

The catalysed reaction is a 3-demethylubiquinol + S-adenosyl-L-methionine = a ubiquinol + S-adenosyl-L-homocysteine + H(+). The enzyme catalyses a 3-(all-trans-polyprenyl)benzene-1,2-diol + S-adenosyl-L-methionine = a 2-methoxy-6-(all-trans-polyprenyl)phenol + S-adenosyl-L-homocysteine + H(+). It participates in cofactor biosynthesis; ubiquinone biosynthesis. O-methyltransferase that catalyzes the 2 O-methylation steps in the ubiquinone biosynthetic pathway. The protein is Ubiquinone biosynthesis O-methyltransferase of Burkholderia thailandensis (strain ATCC 700388 / DSM 13276 / CCUG 48851 / CIP 106301 / E264).